The chain runs to 232 residues: MAKLTRKQKAVAEQCDFQKSYKLEEAIELVQKITYTKFDASIDIAVHLGVDPRKADQMVRGTVVLPHGTGKNKRILVLCTPEKEKEAREAGADHVGLDDYIKKIEEGWVDIDVIITMPEIMAKVGRLGKILGPRGLMPNPKTGTVTVEIAKAVQAVKSGKIEYKVDKYGIVHASVGRVSFSKEALRDNAKELLATLLKAKPASAKGSYLKSISLASTMSKGVDVDTSTNFGF.

It belongs to the universal ribosomal protein uL1 family. In terms of assembly, part of the 50S ribosomal subunit.

In terms of biological role, binds directly to 23S rRNA. The L1 stalk is quite mobile in the ribosome, and is involved in E site tRNA release. Its function is as follows. Protein L1 is also a translational repressor protein, it controls the translation of the L11 operon by binding to its mRNA. In Amoebophilus asiaticus (strain 5a2), this protein is Large ribosomal subunit protein uL1.